Reading from the N-terminus, the 225-residue chain is MNSVEFLPLDRITPNSVISTTSNDLSNWSRLSSLWPLLYGTSCCFIEFASLIGSRFDFDRYGLVPRSSPRQADLILTAGTVTMKMAPSLVRLYEQMPEPKYVIAMGACTITGGMFSTDSYSTVRGVDKLIPVDVYLPGCPPKPEAVIDAITKLRKKISWEIYEDRIQSQRKNRYFTIKHKFRVGRRIHTGNYNQGLLSKSPSISEIPPEKFFKYRSSVSSHEFVN.

[4Fe-4S] cluster contacts are provided by Cys-43, Cys-44, Cys-108, and Cys-139.

Belongs to the complex I 20 kDa subunit family. As to quaternary structure, NDH is composed of at least 16 different subunits, 5 of which are encoded in the nucleus. It depends on [4Fe-4S] cluster as a cofactor.

Its subcellular location is the plastid. The protein localises to the chloroplast thylakoid membrane. The catalysed reaction is a plastoquinone + NADH + (n+1) H(+)(in) = a plastoquinol + NAD(+) + n H(+)(out). The enzyme catalyses a plastoquinone + NADPH + (n+1) H(+)(in) = a plastoquinol + NADP(+) + n H(+)(out). In terms of biological role, NDH shuttles electrons from NAD(P)H:plastoquinone, via FMN and iron-sulfur (Fe-S) centers, to quinones in the photosynthetic chain and possibly in a chloroplast respiratory chain. The immediate electron acceptor for the enzyme in this species is believed to be plastoquinone. Couples the redox reaction to proton translocation, and thus conserves the redox energy in a proton gradient. The sequence is that of NAD(P)H-quinone oxidoreductase subunit K, chloroplastic from Fagopyrum esculentum subsp. ancestrale (Wild buckwheat).